Reading from the N-terminus, the 89-residue chain is Small ribosomal subunit protein uS15 (89 aa).

The protein belongs to the universal ribosomal protein uS15 family. Part of the 30S ribosomal subunit. Forms a bridge to the 50S subunit in the 70S ribosome, contacting the 23S rRNA.

In terms of biological role, one of the primary rRNA binding proteins, it binds directly to 16S rRNA where it helps nucleate assembly of the platform of the 30S subunit by binding and bridging several RNA helices of the 16S rRNA. Its function is as follows. Forms an intersubunit bridge (bridge B4) with the 23S rRNA of the 50S subunit in the ribosome. The chain is Small ribosomal subunit protein uS15 from Bacillus anthracis (strain CDC 684 / NRRL 3495).